The chain runs to 338 residues: Lipoate-protein ligase A (338 aa).

The BPL/LPL catalytic domain maps to 29–216 (PATQRVLFLW…AFFAHYGERV (188 aa)). ATP is bound by residues Arg-71, 76 to 79 (GAVF), and Lys-134. Lys-134 serves as a coordination point for (R)-lipoate.

The protein belongs to the LplA family. As to quaternary structure, monomer.

The protein resides in the cytoplasm. It catalyses the reaction L-lysyl-[lipoyl-carrier protein] + (R)-lipoate + ATP = N(6)-[(R)-lipoyl]-L-lysyl-[lipoyl-carrier protein] + AMP + diphosphate + H(+). It functions in the pathway protein modification; protein lipoylation via exogenous pathway; protein N(6)-(lipoyl)lysine from lipoate: step 1/2. The protein operates within protein modification; protein lipoylation via exogenous pathway; protein N(6)-(lipoyl)lysine from lipoate: step 2/2. Its function is as follows. Catalyzes both the ATP-dependent activation of exogenously supplied lipoate to lipoyl-AMP and the transfer of the activated lipoyl onto the lipoyl domains of lipoate-dependent enzymes. The chain is Lipoate-protein ligase A from Salmonella dublin (strain CT_02021853).